We begin with the raw amino-acid sequence, 134 residues long: Calcitonin gene-related peptide 2 (134 aa).

Residues 1 to 26 (MDFWKFFPFLALSSMWVLCLASSLQA) form the signal peptide. The propeptide occupies 27–86 (APFRSALESSLDLGTLSDQEKHLLLAALIQDYEQKARKLEQEEQETEGSRKGSSSSVISQ). The interval 65 to 91 (LEQEEQETEGSRKGSSSSVISQKRSCN) is disordered. Low complexity predominate over residues 77 to 89 (KGSSSSVISQKRS). Cys90 and Cys95 are oxidised to a cystine. Phe125 carries the post-translational modification Phenylalanine amide. Positions 131 to 134 (DLRV) are excised as a propeptide.

The protein belongs to the calcitonin family.

The protein resides in the secreted. In terms of biological role, CALCB/CGRP2 is a peptide hormone that induces vasodilation mediated by the CALCRL-RAMP1 receptor complex. Dilates a variety of vessels including the coronary, cerebral and systemic vasculature. Its abundance in the CNS also points toward a neurotransmitter or neuromodulator role. The protein is Calcitonin gene-related peptide 2 of Rattus norvegicus (Rat).